Here is a 224-residue protein sequence, read N- to C-terminus: Lipoprotein-releasing system ATP-binding protein LolD (224 aa).

The ABC transporter domain occupies 5 to 224; that stretch reads LVLDGLTKAY…VVRLEAGRVV (220 aa). Position 42 to 49 (42 to 49) interacts with ATP; sequence APSGAGKS.

Belongs to the ABC transporter superfamily. Lipoprotein translocase (TC 3.A.1.125) family. In terms of assembly, the complex is composed of two ATP-binding proteins (LolD) and two transmembrane proteins (LolC and LolE).

The protein localises to the cell inner membrane. Functionally, part of the ABC transporter complex LolCDE involved in the translocation of mature outer membrane-directed lipoproteins, from the inner membrane to the periplasmic chaperone, LolA. Responsible for the formation of the LolA-lipoprotein complex in an ATP-dependent manner. The protein is Lipoprotein-releasing system ATP-binding protein LolD of Cereibacter sphaeroides (strain ATCC 17023 / DSM 158 / JCM 6121 / CCUG 31486 / LMG 2827 / NBRC 12203 / NCIMB 8253 / ATH 2.4.1.) (Rhodobacter sphaeroides).